The following is a 134-amino-acid chain: Profilin-1 (134 aa).

The cysteines at positions 13 and 118 are disulfide-linked. An Involved in PIP2 interaction motif is present at residues 84–100; that stretch reads AVIRGKKGSGGITIKKT. Threonine 114 is subject to Phosphothreonine.

Belongs to the profilin family. Occurs in many kinds of cells as a complex with monomeric actin in a 1:1 ratio. In terms of processing, phosphorylated by MAP kinases.

The protein resides in the cytoplasm. It is found in the cytoskeleton. Binds to actin and affects the structure of the cytoskeleton. At high concentrations, profilin prevents the polymerization of actin, whereas it enhances it at low concentrations. In Olea europaea (Common olive), this protein is Profilin-1.